The sequence spans 599 residues: Adenine deaminase (599 aa).

It belongs to the metallo-dependent hydrolases superfamily. Adenine deaminase family. It depends on Mn(2+) as a cofactor.

The catalysed reaction is adenine + H2O + H(+) = hypoxanthine + NH4(+). This chain is Adenine deaminase, found in Clostridium botulinum (strain ATCC 19397 / Type A).